We begin with the raw amino-acid sequence, 333 residues long: Glyceraldehyde-3-phosphate dehydrogenase (333 aa).

Residue Ser-1 is modified to N-acetylserine. NAD(+) is bound by residues 10-11, Asp-31, and Met-76; that span reads RI. D-glyceraldehyde 3-phosphate contacts are provided by residues 147 to 149, Thr-178, 207 to 208, and Arg-230; these read SCT and TG. The Nucleophile role is filled by Cys-148. Position 312 (Asn-312) interacts with NAD(+).

This sequence belongs to the glyceraldehyde-3-phosphate dehydrogenase family. In terms of assembly, homotetramer.

It is found in the cytoplasm. It carries out the reaction D-glyceraldehyde 3-phosphate + phosphate + NAD(+) = (2R)-3-phospho-glyceroyl phosphate + NADH + H(+). It functions in the pathway carbohydrate degradation; glycolysis; pyruvate from D-glyceraldehyde 3-phosphate: step 1/5. This is Glyceraldehyde-3-phosphate dehydrogenase from Panulirus versicolor (Painted spiny lobster).